Consider the following 224-residue polypeptide: Probable octanoyltransferase (224 aa).

The 172-residue stretch at 28–199 (GLTGDIALVT…KLALELGLTP (172 aa)) folds into the BPL/LPL catalytic domain. Substrate-binding positions include 66–73 (RGGDATYH), 130–132 (SIG), and 143–145 (GVA). Catalysis depends on C161, which acts as the Acyl-thioester intermediate.

It belongs to the LipB family.

The protein localises to the cytoplasm. It carries out the reaction octanoyl-[ACP] + L-lysyl-[protein] = N(6)-octanoyl-L-lysyl-[protein] + holo-[ACP] + H(+). It participates in protein modification; protein lipoylation via endogenous pathway; protein N(6)-(lipoyl)lysine from octanoyl-[acyl-carrier-protein]: step 1/2. Functionally, catalyzes the transfer of endogenously produced octanoic acid from octanoyl-acyl-carrier-protein onto the lipoyl domains of lipoate-dependent enzymes. Lipoyl-ACP can also act as a substrate although octanoyl-ACP is likely to be the physiological substrate. This chain is Probable octanoyltransferase, found in Pyrobaculum aerophilum (strain ATCC 51768 / DSM 7523 / JCM 9630 / CIP 104966 / NBRC 100827 / IM2).